The chain runs to 624 residues: Vitamin B12 transporter BtuB (624 aa).

Positions 1–21 (MTIKKYTLLTALSVTAFSGWA) are cleaved as a signal peptide. The short motif at 31-38 (NEMVVTAN) is the TonB box element. One can recognise a TBDR plug domain in the interval 43 to 157 (PKSSVLAPVD…IGGVVNIITE (115 aa)). Residues Leu88, Ser90, Asn97, and 115–116 (IS) contribute to the cyanocob(III)alamin site. Residues 160 to 624 (TLGSTLTAGL…EYYFTGSYNF (465 aa)) enclose the TBDR beta-barrel domain. 3 beta stranded membrane-spanning segments follow: residues 163–170 (STLTAGLG), 174–183 (YQNYNGSTQQ), and 189–200 (TTITLAGNYDYS). Residues Asp204, Gln216, Asp218, and Asp220 each coordinate Ca(2+). The next 2 beta stranded transmembrane spans lie at 222-232 (YLGKMLWLGAN) and 237-253 (EQFS…NRSD). Residues Tyr254, Asp255, and Asp266 each contribute to the Ca(2+) site. Transmembrane regions (beta stranded) follow at residues 268–282 (RSLS…INFS), 284–301 (GGYA…QDYN), 314–330 (TLDD…NTYQ), 333–342 (LGNVGGGLDW), 358–374 (YEQR…QFVG), 376–386 (VTLEGAIRGDD), 390–405 (FGWH…WEFV), 408–422 (YRLI…KAPN), 440–449 (ESTQWEAAIT), 455–464 (LDWRLSAYRN), 481–498 (YYNV…TGSF), 502–517 (PLSH…PRNA), 525–537 (RRAK…QLDW), 543–557 (DWSV…RYDS), 568–582 (PVKL…LAVS), 595–606 (IANLFDKDYEMV), and 612–624 (PGRE…SYNF). Position 314 (Thr314) interacts with cyanocob(III)alamin. Residue Arg525 coordinates cyanocob(III)alamin. Residues 607 to 624 (YGYQTPGREYYFTGSYNF) carry the TonB C-terminal box motif.

The protein belongs to the TonB-dependent receptor family. BtuB (TC 1.B.14.3.1) subfamily.

Its subcellular location is the cell outer membrane. Involved in the active translocation of vitamin B12 (cyanocobalamin) across the outer membrane to the periplasmic space. It derives its energy for transport by interacting with the trans-periplasmic membrane protein TonB. In Yersinia pseudotuberculosis serotype O:1b (strain IP 31758), this protein is Vitamin B12 transporter BtuB.